Here is a 354-residue protein sequence, read N- to C-terminus: MKIAILLSGGVDSSVALYTMIQKGYKNIKCYYLKIWLEDELSYIGECPWKEDITYVDSVCKKFNVPYKIINLQEEYYNRVVTYAIEELKMGNTPSPDIFCNQRIKFGAFFEKINEKYDLIVTGHYAKIENKNNSYTLKQAKDKIKDQSYFLSHLSKKQISKLHFPLGDLLKSEIRQIAHEIDLPNKNRKDSQGICFLGKIKYNEFIKYHLGELKGNIIEQETGKILGTHNGYWFFTIGQRKGIKLSHGPWFVTEKDIQNNIIYISNSTNYLKQGKEQFLVHKTNWINKPLKNNNLSAKIRHGEKKIKCKIETLKDEIIRVNLEEKDYGISPGQFCIFYKEDECLGGAKILKTLI.

ATP-binding positions include 6-13 (LLSGGVDS) and L33. C100 serves as the catalytic Nucleophile. The cysteines at positions 100 and 195 are disulfide-linked. G123 lines the ATP pocket. The segment at 145–147 (KDQ) is interaction with tRNA. C195 (cysteine persulfide intermediate) is an active-site residue.

Belongs to the MnmA/TRMU family.

Its subcellular location is the cytoplasm. It catalyses the reaction S-sulfanyl-L-cysteinyl-[protein] + uridine(34) in tRNA + AH2 + ATP = 2-thiouridine(34) in tRNA + L-cysteinyl-[protein] + A + AMP + diphosphate + H(+). Its function is as follows. Catalyzes the 2-thiolation of uridine at the wobble position (U34) of tRNA, leading to the formation of s(2)U34. The chain is tRNA-specific 2-thiouridylase MnmA from Borrelia recurrentis (strain A1).